Consider the following 1196-residue polypeptide: RNA-dependent RNA polymerase 6 (1196 aa).

This sequence belongs to the RdRP family. As to quaternary structure, interacts with SGS3. In terms of tissue distribution, widely expressed.

It is found in the cytoplasmic granule. It localises to the nucleus. The catalysed reaction is RNA(n) + a ribonucleoside 5'-triphosphate = RNA(n+1) + diphosphate. RNA-dependent RNA polymerase involved in post-transcriptional gene silencing (PTGS). Possesses ssRNA and ssDNA-dependent polymerase activity, but does not have priming activity. Possesses in vitro 3' nucleotidyltransferase activity in the presence of UTP as single nucleotide. Required for the production of 21 nucleotide trans-acting small interfering RNAs (ta-siRNAs) derived from TAS1, TAS2 and TAS3 endogenous transcripts. Acts in the RDR6/SGS3/DCL4/AGO7 ta-siRNA pathway involved in leaf developmental timing. Required for the production of natural siRNAs (nat-siRNAs) derived from cis-natural antisense transcripts. Required for the production of 24 nucleotide nat-siRNAs derived from the stress-related P5CDH-SRO5 antisense gene pair. Required for PTGS induced by transgene direct repeats. Plays an essential role in transitive silencing of transgenes by processing secondary siRNAs. This pathway, which requires DCL2 and DCL4, amplifies silencing by using the target RNA as substrate to generate secondary siRNAs, providing an efficient mechanism for long-distance silencing. Involved in the biogenesis of secondary siRNAs which require 22 nucleotide miRNAs associated to AGO1. Participates synergistically with AS1 and AS2 to proper plant development by repressing the miR165 and miR166 microRNAs (independently of AGO10) that may lead to mRNA degradation of genes in the class III HD-ZIP family. Required for the production of some small RNAs derived from the crucifer-infecting tobamovirus (TMV-cg). Required for sense virus-induced post-transcriptional gene silencing (S-PTGS). The chain is RNA-dependent RNA polymerase 6 (RDR6) from Arabidopsis thaliana (Mouse-ear cress).